We begin with the raw amino-acid sequence, 350 residues long: Small ribosomal subunit biogenesis GTPase RsgA (350 aa).

Residues 1–30 (MSKRKLTQNQQRRIQSNNAKTLHRHQHRHK) form a disordered region. Residues 7–20 (TQNQQRRIQSNNAK) are compositionally biased toward polar residues. Basic residues predominate over residues 21–30 (TLHRHQHRHK). One can recognise a CP-type G domain in the interval 106-274 (HNQIVRPDYY…LIDSPGIREF (169 aa)). GTP-binding positions include 162–165 (NKAD) and 216–224 (GQSGVGKSS). The Zn(2+) site is built by cysteine 298, cysteine 303, histidine 305, and cysteine 311.

It belongs to the TRAFAC class YlqF/YawG GTPase family. RsgA subfamily. In terms of assembly, monomer. Associates with 30S ribosomal subunit, binds 16S rRNA. Requires Zn(2+) as cofactor.

It is found in the cytoplasm. Its function is as follows. One of several proteins that assist in the late maturation steps of the functional core of the 30S ribosomal subunit. Helps release RbfA from mature subunits. May play a role in the assembly of ribosomal proteins into the subunit. Circularly permuted GTPase that catalyzes slow GTP hydrolysis, GTPase activity is stimulated by the 30S ribosomal subunit. This chain is Small ribosomal subunit biogenesis GTPase RsgA, found in Histophilus somni (strain 2336) (Haemophilus somnus).